Consider the following 329-residue polypeptide: Red chlorophyll catabolite reductase 1, chloroplastic (329 aa).

Residues 1 to 11 show a composition bias toward pro residues; that stretch reads MLQLRSPPPAT. The transit peptide at 1-50 directs the protein to the chloroplast; sequence MLQLRSPPPATSSPSSAVSFPTLAPRLLPLRRRRRGAGSQLGGKTSSAVR. The segment at 1 to 61 is disordered; sequence MLQLRSPPPA…SSAAAPGATE (61 aa). 2 stretches are compositionally biased toward low complexity: residues 12-28 and 46-59; these read SSPS…PRLL and SSAV…APGA. Red chlorophyll catabolite-binding positions include Glu163, 216–218, and Asp299; that span reads YRS.

As to expression, expressed in leaves. Expressed at low levels in roots, stems, panicles and seeds.

It localises to the plastid. The protein localises to the chloroplast. The catalysed reaction is primary fluorescent chlorophyll catabolite + 2 oxidized [2Fe-2S]-[ferredoxin] = red chlorophyll catabolite + 2 reduced [2Fe-2S]-[ferredoxin] + 3 H(+). It functions in the pathway porphyrin-containing compound metabolism; chlorophyll degradation. In terms of biological role, catalyzes the key reaction of chlorophyll catabolism, porphyrin macrocycle cleavage of pheophorbide a (pheide a) to a primary fluorescent catabolite (pFCC). Works in a two-step reaction with pheophorbide a oxygenase (PaO) by reducing the C20/C1 double bond of the intermediate, RCC. Belongs to the chlorophyll catabolic enzymes (CCEs). May play a role in senescence and response to wounding. The polypeptide is Red chlorophyll catabolite reductase 1, chloroplastic (Oryza sativa subsp. japonica (Rice)).